A 215-amino-acid polypeptide reads, in one-letter code: Nucleoside triphosphate pyrophosphatase (215 aa).

This sequence belongs to the Maf family. It depends on a divalent metal cation as a cofactor.

Its subcellular location is the cytoplasm. The catalysed reaction is a ribonucleoside 5'-triphosphate + H2O = a ribonucleoside 5'-phosphate + diphosphate + H(+). The enzyme catalyses a 2'-deoxyribonucleoside 5'-triphosphate + H2O = a 2'-deoxyribonucleoside 5'-phosphate + diphosphate + H(+). Functionally, nucleoside triphosphate pyrophosphatase. May have a dual role in cell division arrest and in preventing the incorporation of modified nucleotides into cellular nucleic acids. This chain is Nucleoside triphosphate pyrophosphatase, found in Rickettsia conorii (strain ATCC VR-613 / Malish 7).